The chain runs to 673 residues: UvrABC system protein B (673 aa).

In terms of domain architecture, Helicase ATP-binding spans 26–183 (EGLEDGLAHQ…RRLAELQYAR (158 aa)). 39–46 (GVTGSGKT) lines the ATP pocket. The Beta-hairpin signature appears at 92-115 (YYDYYQPEAYVPSSDTFIEKDASV). The region spanning 431–597 (QVDDLLSEIR…GLNKKVVDIL (167 aa)) is the Helicase C-terminal domain. Positions 633–668 (QQKIHELEGLMMQHAQNLEFEEAAQVRDQLHQLRQL) constitute a UVR domain.

The protein belongs to the UvrB family. As to quaternary structure, forms a heterotetramer with UvrA during the search for lesions. Interacts with UvrC in an incision complex.

The protein resides in the cytoplasm. In terms of biological role, the UvrABC repair system catalyzes the recognition and processing of DNA lesions. A damage recognition complex composed of 2 UvrA and 2 UvrB subunits scans DNA for abnormalities. Upon binding of the UvrA(2)B(2) complex to a putative damaged site, the DNA wraps around one UvrB monomer. DNA wrap is dependent on ATP binding by UvrB and probably causes local melting of the DNA helix, facilitating insertion of UvrB beta-hairpin between the DNA strands. Then UvrB probes one DNA strand for the presence of a lesion. If a lesion is found the UvrA subunits dissociate and the UvrB-DNA preincision complex is formed. This complex is subsequently bound by UvrC and the second UvrB is released. If no lesion is found, the DNA wraps around the other UvrB subunit that will check the other stand for damage. The chain is UvrABC system protein B from Enterobacter sp. (strain 638).